The following is a 904-amino-acid chain: Protein translocase subunit SecA (904 aa).

ATP contacts are provided by residues Gln89, 107–111 (GEGKT), and Asp502. Residues Cys886, Cys888, Cys897, and His898 each coordinate Zn(2+).

This sequence belongs to the SecA family. In terms of assembly, monomer and homodimer. Part of the essential Sec protein translocation apparatus which comprises SecA, SecYEG and auxiliary proteins SecDF-YajC and YidC. Zn(2+) is required as a cofactor.

The protein localises to the cell inner membrane. The protein resides in the cytoplasm. It catalyses the reaction ATP + H2O + cellular proteinSide 1 = ADP + phosphate + cellular proteinSide 2.. Functionally, part of the Sec protein translocase complex. Interacts with the SecYEG preprotein conducting channel. Has a central role in coupling the hydrolysis of ATP to the transfer of proteins into and across the cell membrane, serving both as a receptor for the preprotein-SecB complex and as an ATP-driven molecular motor driving the stepwise translocation of polypeptide chains across the membrane. This is Protein translocase subunit SecA from Rhizobium etli (strain CIAT 652).